Here is a 273-residue protein sequence, read N- to C-terminus: Type IV secretion system protein PtlF homolog (273 aa).

The first 20 residues, 1–20 (MMAARMMAAGLAATALSAHA), serve as a signal peptide directing secretion.

Belongs to the TrbG/VirB9 family.

The protein resides in the cell outer membrane. The protein is Type IV secretion system protein PtlF homolog (ptlF) of Bordetella bronchiseptica (strain ATCC BAA-588 / NCTC 13252 / RB50) (Alcaligenes bronchisepticus).